We begin with the raw amino-acid sequence, 831 residues long: Probable inactive serine/threonine-protein kinase DDB_G0274613 (831 aa).

The RING-type zinc-finger motif lies at 9-63 (CSICSEEVIDFAAIFSSNKKFGDKACKHNFCVSCLTYLMEYNTRNKKALCCPICR). Residues 83–348 (RKLSSAQIFL…LEEMKLLYQF (266 aa)) are a coiled coil. The region spanning 414–787 (QIHKVSIGNG…ANQAAFHKFF (374 aa)) is the Protein kinase domain. The interval 657–703 (NNNNNNNNNNNNNNNNNNNNNNNNNNNNNNNNNNNNNNNNNIESNFN) is disordered.

This sequence belongs to the protein kinase superfamily. CMGC Ser/Thr protein kinase family.

This Dictyostelium discoideum (Social amoeba) protein is Probable inactive serine/threonine-protein kinase DDB_G0274613.